The following is a 64-amino-acid chain: Large ribosomal subunit protein bL35 (64 aa).

It belongs to the bacterial ribosomal protein bL35 family.

The chain is Large ribosomal subunit protein bL35 from Leifsonia xyli subsp. xyli (strain CTCB07).